A 472-amino-acid polypeptide reads, in one-letter code: CAAX prenyl protease 1 homolog (472 aa).

Residues 1–8 (MDVGGALD) lie on the Lumenal side of the membrane. The helical transmembrane segment at 9 to 29 (LYGCSVNVYNAILIFIWVLFL) threads the bilayer. Topologically, residues 30–75 (WETYINLRQLKVAKRVTESPEEIKCLMNDVDFDKSRRYAIDKMNFD) are cytoplasmic. Residues 76–96 (IVSGFYNILSLSAVLYFQLIA) traverse the membrane as a helical segment. Residues 97–124 (WAWHKSQEHMLFVCSYAPRSFGTTEGSE) are Lumenal-facing. The helical transmembrane segment at 125–145 (ILFSLLFTVYVALFQFFESLP) threads the bilayer. At 146-175 (WSYYRHFVIEERYGFNKQTIGFFIKDRLKS) the chain is on the cytoplasmic side. Residues 176 to 196 (LAVGLVIGLPIISMLVWIIKA) form a helical membrane-spanning segment. The Lumenal segment spans residues 197–207 (GGHYFYIYAYG). Residues 208 to 228 (FTFVVSFIIMFIYPEFIAPIF) form a helical membrane-spanning segment. Over 229–340 (DRYEHFPDCE…LGHWKLKHMT (112 aa)) the chain is Cytoplasmic. A Zn(2+)-binding site is contributed by His-329. The active site involves Glu-330. His-333 contributes to the Zn(2+) binding site. Residues 341–361 (FNLIIAQINIFFMFFAFGQLI) form a helical membrane-spanning segment. Residues 362 to 382 (NVDQLFVDFGFPPSTAPILIR) lie on the Lumenal side of the membrane. A helical membrane pass occupies residues 383–403 (LIVVFQFIFMPYSSVLEFLMT). The Cytoplasmic portion of the chain corresponds to 404 to 472 (MLSRKFEFQA…AIDAKMGKEK (69 aa)). Glu-410 is a binding site for Zn(2+). Asp-414 functions as the Proton donor in the catalytic mechanism.

Belongs to the peptidase M48A family. In terms of assembly, homodimer; disulfide-linked. It depends on Zn(2+) as a cofactor.

The protein resides in the endoplasmic reticulum membrane. It carries out the reaction Hydrolyzes the peptide bond -P2-(S-farnesyl or geranylgeranyl)C-P1'-P2'-P3'-COOH where P1' and P2' are amino acids with aliphatic side chains and P3' is any C-terminal residue.. With respect to regulation, inhibited by ethylenediaminetetraacetic acid (EDTA) but not by serine, aspartic or cysteine protease inhibitors. Inhibited by high concentration of Zn(2+) (&gt; 0.1 mM). Functionally, zinc-dependent metalloproteinase. Proteolytically removes the C-terminal three residues of farnesylated proteins. In Taenia solium (Pork tapeworm), this protein is CAAX prenyl protease 1 homolog.